A 174-amino-acid polypeptide reads, in one-letter code: MGARMTRAFRNFNVEKRAEQEISKRKPSMAPKHPSTRSLLQEHLSQYPEIEEEVSRKDNKLLSLLRDVYVNSKDPVPSLPVKAIEPQQQPKEFRLPIGDQFDKNIKDIPKGKITVVEALTLLNNHKLSPETWTAEKIAQEYHLELEDVNSLLKYFVTFEVKIVPPEDRKAIQSK.

Gly2 carries N-myristoyl glycine lipidation. The span at 15-24 (EKRAEQEISK) shows a compositional bias: basic and acidic residues. The tract at residues 15-38 (EKRAEQEISKRKPSMAPKHPSTRS) is disordered. The residue at position 35 (Ser35) is a Phosphoserine.

Belongs to the NDUFAF4 family. As to quaternary structure, binds calmodulin. Interacts with NDUFAF3. Post-translationally, phosphorylated on serine. Prolactin stimulate serine phosphorylation.

It is found in the mitochondrion. The protein resides in the membrane. Its function is as follows. May be involved in cell proliferation and survival of hormone-dependent tumor cells. Involved in the assembly of mitochondrial NADH:ubiquinone oxidoreductase complex (complex I). This chain is NADH dehydrogenase [ubiquinone] 1 alpha subcomplex assembly factor 4 (Ndufaf4), found in Rattus norvegicus (Rat).